The chain runs to 503 residues: AMP phosphorylase (503 aa).

AMP-binding positions include glycine 168, 194–199, and serine 203; that span reads SRAITG. Aspartate 256 functions as the Proton donor in the catalytic mechanism. AMP contacts are provided by serine 264 and lysine 288.

This sequence belongs to the thymidine/pyrimidine-nucleoside phosphorylase family. Type 2 subfamily.

It carries out the reaction AMP + phosphate = alpha-D-ribose 1,5-bisphosphate + adenine. It catalyses the reaction CMP + phosphate = cytosine + alpha-D-ribose 1,5-bisphosphate. The enzyme catalyses UMP + phosphate = alpha-D-ribose 1,5-bisphosphate + uracil. Its function is as follows. Catalyzes the conversion of AMP and phosphate to adenine and ribose 1,5-bisphosphate (R15P). Exhibits phosphorylase activity toward CMP and UMP in addition to AMP. Functions in an archaeal AMP degradation pathway, together with R15P isomerase and RubisCO. This Methanocella arvoryzae (strain DSM 22066 / NBRC 105507 / MRE50) protein is AMP phosphorylase.